A 117-amino-acid polypeptide reads, in one-letter code: UPF0251 protein DET0218 (117 aa).

It belongs to the UPF0251 family.

The sequence is that of UPF0251 protein DET0218 from Dehalococcoides mccartyi (strain ATCC BAA-2266 / KCTC 15142 / 195) (Dehalococcoides ethenogenes (strain 195)).